The following is a 103-amino-acid chain: Ghrelin (103 aa).

The signal sequence occupies residues 1–26 (MPLRRRASHMFVLLCALSLCVESVKG). The tract at residues 27-51 (GTSFLSPAQKPQGRRPPRMGRRDVA) is disordered. Ser-29 is lipidated: O-decanoyl serine; alternate. A lipid anchor (O-hexanoyl serine; alternate) is attached at Ser-29. The O-octanoyl serine; alternate moiety is linked to residue Ser-29. Glutamine amide is present on Gln-38. Met-45 carries the post-translational modification Methionine amide. A propeptide spans 49-103 (DVAEPEIPVIKEDDQFMMSAPFELSVSLSEAEYEKYGPVLQKVLVNLLGDSPLEF) (removed in mature form).

This sequence belongs to the motilin family. Post-translationally, O-octanoylated by GOAT/MBOAT4. O-octanoylation or O-decanoylation is essential for activity. The O-decanoylated form differs in the length of the carbon backbone of the carboxylic acid forming an ester bond with Ser-29. Expressed in the telencephalon, hypothalamus, pituitary, intestine, liver, spleen and gill, with expression strongest in the intestine.

Its subcellular location is the secreted. Its function is as follows. Ligand for growth hormone secretagogue receptor type 1 (GHSR). Induces the release of growth hormone from the pituitary. Induces adiposity and stimulates gastric acid secretion. Involved in growth regulation. Has an appetite-stimulating effect. The sequence is that of Ghrelin (ghrl) from Carassius auratus (Goldfish).